A 153-amino-acid chain; its full sequence is MNRGVSFQIPNEYGNFLWRILQPVEIANYRWQTSGESYFVVEGELDDEELFHDYEIVEGAVFEQQLKTNQYYTIFVELKAFPYGKMVNQVNTYEEFADSDCELVLLIADNSYVSIYCKNKNIIEKLYFNALQHDFEDVQFITDENDTRTSLTV.

This is an uncharacterized protein from Bacillus subtilis (strain 168).